Here is a 193-residue protein sequence, read N- to C-terminus: Ancillary SecYEG translocon subunit (193 aa).

At Met1–Leu11 the chain is on the cytoplasmic side. A helical membrane pass occupies residues Asn12–Ser34. Residues Lys35–Asn193 lie on the Extracellular side of the membrane.

This sequence belongs to the YfgM family. As to quaternary structure, interacts with the Sec translocon. Forms a complex with PpiD.

Its subcellular location is the cell membrane. Functionally, may mediate protein transfer from the Sec translocon to the chaperone network via its extracellular C-terminal region. This is Ancillary SecYEG translocon subunit from Buchnera aphidicola subsp. Baizongia pistaciae (strain Bp).